The following is a 367-amino-acid chain: Germination protease (367 aa).

Positions 1–15 (MKEPLDLSKYSVRTD) are excised as a propeptide.

The protein belongs to the peptidase A25 family. As to quaternary structure, homotetramer. Post-translationally, autoproteolytically processed. The inactive tetrameric zymogen termed p46 autoprocesses to a smaller form termed p41, which is active only during spore germination.

The enzyme catalyses Endopeptidase action with P4 Glu or Asp, P1 preferably Glu &gt; Asp, P1' hydrophobic and P2' Ala.. Its function is as follows. Initiates the rapid degradation of small, acid-soluble proteins during spore germination. The protein is Germination protease of Bacillus mycoides (strain KBAB4) (Bacillus weihenstephanensis).